The chain runs to 452 residues: Phosphoglucosamine mutase (452 aa).

The active-site Phosphoserine intermediate is Ser112. Residues Ser112, Asp251, Asp253, and Asp255 each contribute to the Mg(2+) site. Residue Ser112 is modified to Phosphoserine.

Belongs to the phosphohexose mutase family. The cofactor is Mg(2+). Activated by phosphorylation.

It catalyses the reaction alpha-D-glucosamine 1-phosphate = D-glucosamine 6-phosphate. Functionally, catalyzes the conversion of glucosamine-6-phosphate to glucosamine-1-phosphate. The polypeptide is Phosphoglucosamine mutase (Bordetella bronchiseptica (strain ATCC BAA-588 / NCTC 13252 / RB50) (Alcaligenes bronchisepticus)).